The chain runs to 825 residues: NT-3 growth factor receptor (825 aa).

An N-terminal signal peptide occupies residues 1-31 (MDVSLCPAKCSFWRIFLLGSVWLDYVGSVLA). 2 disulfides stabilise this stretch: Cys32–Cys38 and Cys36–Cys45. The Extracellular portion of the chain corresponds to 32-429 (CPANCVCSKT…TVTHKPEEDT (398 aa)). Asn68, Asn72, and Asn79 each carry an N-linked (GlcNAc...) asparagine glycan. LRR repeat units lie at residues 104 to 125 (GLQKLTIKNSGLRSIQPRAFAK) and 128 to 149 (HLRYINLSSNRLTTLSWQLFQT). Asn133 and Asn163 each carry an N-linked (GlcNAc...) asparagine glycan. One can recognise an LRRCT domain in the interval 160-209 (NFFNCSCDIRWMQLWQEQGEAKLNSQSLYCISADGSQLPLFRMNISQCDL). Disulfide bonds link Cys164–Cys189 and Cys166–Cys207. Residues Asn203, Asn218, Asn232, Asn259, Asn267, Asn272, and Asn294 are each glycosylated (N-linked (GlcNAc...) asparagine). Ig-like C2-type domains follow at residues 210–300 (PEIS…VALT) and 309–382 (SLEE…NRQE). An intrachain disulfide couples Cys231 to Cys284. Cys320 and Cys362 are disulfide-bonded. Asn375 and Asn388 each carry an N-linked (GlcNAc...) asparagine glycan. A helical transmembrane segment spans residues 430 to 453 (FGVSIAVGLAAFACVLLVVLFIMI). At 454 to 825 (NKYGRRSKFG…ATPIYLDILG (372 aa)) the chain is on the cytoplasmic side. Phosphotyrosine; by autocatalysis is present on Tyr516. In terms of domain architecture, Protein kinase spans 538 to 814 (IVLKRELGEG…EIYKILHALG (277 aa)). ATP contacts are provided by residues 544 to 552 (LGEGAFGKV) and Lys572. Asp679 (proton acceptor) is an active-site residue. A phosphotyrosine; by autocatalysis mark is found at Tyr705, Tyr709, Tyr710, and Tyr820.

Belongs to the protein kinase superfamily. Tyr protein kinase family. Insulin receptor subfamily. In terms of assembly, exists in a dynamic equilibrium between monomeric (low affinity) and dimeric (high affinity) structures. Binds SH2B2. Interacts with SQSTM1 and KIDINS220. Interacts with PTPRS. Interacts with MAPK8IP3/JIP3. Ligand-mediated auto-phosphorylation. Preferentially in the brain, low levels in the ovaries.

The protein localises to the membrane. It catalyses the reaction L-tyrosyl-[protein] + ATP = O-phospho-L-tyrosyl-[protein] + ADP + H(+). Its function is as follows. Receptor tyrosine kinase involved in nervous system and probably heart development. Upon binding of its ligand NTF3/neurotrophin-3, NTRK3 autophosphorylates and activates different signaling pathways, including the phosphatidylinositol 3-kinase/AKT and the MAPK pathways, that control cell survival and differentiation. This chain is NT-3 growth factor receptor (NTRK3), found in Sus scrofa (Pig).